A 274-amino-acid chain; its full sequence is Diaminopimelate epimerase (274 aa).

The substrate site is built by N13, Q47, and N65. Residue C74 is the Proton donor of the active site. Substrate is bound by residues 75–76, N149, N182, and 200–201; these read GN and ER. The active-site Proton acceptor is the C209. 210–211 contributes to the substrate binding site; sequence GT.

Belongs to the diaminopimelate epimerase family. In terms of assembly, homodimer.

The protein localises to the cytoplasm. The catalysed reaction is (2S,6S)-2,6-diaminopimelate = meso-2,6-diaminopimelate. It functions in the pathway amino-acid biosynthesis; L-lysine biosynthesis via DAP pathway; DL-2,6-diaminopimelate from LL-2,6-diaminopimelate: step 1/1. Catalyzes the stereoinversion of LL-2,6-diaminopimelate (L,L-DAP) to meso-diaminopimelate (meso-DAP), a precursor of L-lysine and an essential component of the bacterial peptidoglycan. The chain is Diaminopimelate epimerase from Rhizorhabdus wittichii (strain DSM 6014 / CCUG 31198 / JCM 15750 / NBRC 105917 / EY 4224 / RW1) (Sphingomonas wittichii).